The primary structure comprises 503 residues: MTLVDWFLDTIALLLGLLHIWIARHFQHWEEKGVHHVAPQPLVGSMLRLLTFSVSPAVFIQGVHEAAGSHPYIGFYIFGRPALLVRDPSLLQHILVKDFSNFTDRLTSSNKHKDPVGAANLFCIKGNRWRQIRACITHTFSTARLKIMFSRVLNSASVTRDYILERGNQPINVKDLFVRTSLDSMCSTLFGIESSTLYNSEAQFLHYGHKMMRWTPYRALEALAHFFSPELLNVFDTRLFECESTEFLINAFSEAITEREKTGLYCSDLVDSLIQLKKQLIDVSEHEVLGQAMLFFAAGFETTSSAMAFAMYELALHPEIQDRLRTEIQEVTACHGGQVTYEGVKKMSYLDMVVSEVLRKYPPMSFIDRVCLHDYHIPGTDVVIEKGTPIFVSLLGLHRDSIFYPDPEDFNPERFNKEKKSGVHPFSYIPFGDGPRNCIGLRLGLMSVKLVIIMLLQSLRVETHESTPVPLQLSPYVLFLKNLGRLPLMFVPIGEDNVETSLA.

Cys438 contributes to the heme binding site.

The protein belongs to the cytochrome P450 family. Heme is required as a cofactor. As to expression, detected only in testes and accessory glands of male adults.

The protein localises to the endoplasmic reticulum membrane. The protein resides in the microsome membrane. The polypeptide is Cytochrome P450 6l1 (CYP6L1) (Blattella germanica (German cockroach)).